Here is a 370-residue protein sequence, read N- to C-terminus: NSFL1 cofactor p47 (370 aa).

A compositionally biased stretch (polar residues) spans 54-73; the sequence is SQATPSSVSRGTAPSDNRVT. The segment at 54–116 is disordered; the sequence is SQATPSSVSR…VGPPRKKSPN (63 aa). 4 positions are modified to phosphoserine: S74, S102, S114, and S140. The short motif at 109-115 is the Nuclear localization signal element; sequence PPRKKSP. A Phosphotyrosine modification is found at Y167. A Nuclear localization signal motif is present at residues 172-175; it reads KRQH. Residues S176, S192, and S272 each carry the phosphoserine modification. The SEP domain maps to 179–244; the sequence is DVHVVLKLWK…MEDHRDEDFV (66 aa). The span at 261–287 shows a compositional bias: polar residues; that stretch reads GSTAPQVLSTSSPAQQAENEAKASSSI. The segment at 261–289 is disordered; the sequence is GSTAPQVLSTSSPAQQAENEAKASSSILI. In terms of domain architecture, UBX spans 291–368; that stretch reads ESEPTTNIQI…NLLNAVIVQR (78 aa).

The protein belongs to the NSFL1C family. In terms of assembly, part of a ternary complex containing STX5A, NSFL1C and VCP. NSFL1C forms a homotrimer that binds to one end of a VCP homohexamer. The complex binds to membranes enriched in phosphatidylethanolamine-containing lipids and promotes Golgi membrane fusion. Interaction with VCIP135 leads to dissociation of the complex via ATP hydrolysis by VCP. Binds ubiquitin and mono-ubiquitinated proteins via its N-terminal UBA-like domain when bound to VCP. In terms of processing, phosphorylated during mitosis. Phosphorylation inhibits interaction with Golgi membranes and is required for the fragmentation of the Golgi stacks during mitosis.

The protein resides in the nucleus. The protein localises to the golgi apparatus. Its subcellular location is the golgi stack. It is found in the chromosome. It localises to the cytoplasm. The protein resides in the cytoskeleton. The protein localises to the microtubule organizing center. Its subcellular location is the centrosome. Reduces the ATPase activity of VCP. Necessary for the fragmentation of Golgi stacks during mitosis and for VCP-mediated reassembly of Golgi stacks after mitosis. May play a role in VCP-mediated formation of transitional endoplasmic reticulum (tER). Inhibits the activity of CTSL (in vitro). Together with UBXN2B/p37, regulates the centrosomal levels of kinase AURKA/Aurora A during mitotic progression by promoting AURKA removal from centrosomes in prophase. Also, regulates spindle orientation during mitosis. In Homo sapiens (Human), this protein is NSFL1 cofactor p47 (NSFL1C).